The primary structure comprises 971 residues: Isoleucine--tRNA ligase (971 aa).

Residues 64–74 (PYANGHIHIGH) carry the 'HIGH' region motif. E602 contacts L-isoleucyl-5'-AMP. The 'KMSKS' region motif lies at 643–647 (KMSKS). K646 contacts ATP.

It belongs to the class-I aminoacyl-tRNA synthetase family. IleS type 1 subfamily. In terms of assembly, monomer.

The protein localises to the cytoplasm. It carries out the reaction tRNA(Ile) + L-isoleucine + ATP = L-isoleucyl-tRNA(Ile) + AMP + diphosphate. In terms of biological role, catalyzes the attachment of isoleucine to tRNA(Ile). As IleRS can inadvertently accommodate and process structurally similar amino acids such as valine, to avoid such errors it has two additional distinct tRNA(Ile)-dependent editing activities. One activity is designated as 'pretransfer' editing and involves the hydrolysis of activated Val-AMP. The other activity is designated 'posttransfer' editing and involves deacylation of mischarged Val-tRNA(Ile). In Bartonella quintana (strain Toulouse) (Rochalimaea quintana), this protein is Isoleucine--tRNA ligase.